A 550-amino-acid chain; its full sequence is Methionine--tRNA ligase (550 aa).

The 'HIGH' region motif lies at 14–24 (PYANGSLHIGH). Zn(2+) contacts are provided by C145, C148, C158, and C161. The short motif at 331-335 (KMSKS) is the 'KMSKS' region element. An ATP-binding site is contributed by K334.

This sequence belongs to the class-I aminoacyl-tRNA synthetase family. MetG type 1 subfamily. Monomer. Zn(2+) is required as a cofactor.

It is found in the cytoplasm. The catalysed reaction is tRNA(Met) + L-methionine + ATP = L-methionyl-tRNA(Met) + AMP + diphosphate. In terms of biological role, is required not only for elongation of protein synthesis but also for the initiation of all mRNA translation through initiator tRNA(fMet) aminoacylation. The chain is Methionine--tRNA ligase from Wigglesworthia glossinidia brevipalpis.